We begin with the raw amino-acid sequence, 216 residues long: MKIPVLDKGFVELVDVMGNDLSAVRAARVSFNMELKDEEKDRRLVEYLMRHGHESPFEHIVFTFHVKAPIFVARQWFRHRIASYNELSGRYSKLTYEFYIPPLQRFGQTRIVPEKVIEKISHVVNESYQTYMELLEAGVPREVARIVLPLNLYTRFYWTVNARSLMNFLNLRADSHAQWEIQQYAVAIAKIFREKCPWTYEAFIKYAYKGDLLREV.

The 198-residue stretch at 9–206 (GFVELVDVMG…PWTYEAFIKY (198 aa)) folds into the ThyX domain. FAD contacts are provided by residues serine 55, 78–80 (RHR), and glutamate 86. DUMP is bound by residues 75-78 (QWFR), 86-90 (ELSGR), and arginine 145. A ThyX motif motif is present at residues 78 to 88 (RHRIASYNELS). Residues 161–163 (NAR) and asparagine 167 contribute to the FAD site. Residue arginine 172 coordinates dUMP. Residue arginine 172 is the Involved in ionization of N3 of dUMP, leading to its activation of the active site.

This sequence belongs to the thymidylate synthase ThyX family. As to quaternary structure, homotetramer. FAD is required as a cofactor.

It catalyses the reaction dUMP + (6R)-5,10-methylene-5,6,7,8-tetrahydrofolate + NADPH + H(+) = dTMP + (6S)-5,6,7,8-tetrahydrofolate + NADP(+). Its pathway is pyrimidine metabolism; dTTP biosynthesis. Catalyzes the reductive methylation of 2'-deoxyuridine-5'-monophosphate (dUMP) to 2'-deoxythymidine-5'-monophosphate (dTMP) while utilizing 5,10-methylenetetrahydrofolate (mTHF) as the methyl donor, and NADPH and FADH(2) as the reductant. The sequence is that of Flavin-dependent thymidylate synthase from Thermotoga neapolitana (strain ATCC 49049 / DSM 4359 / NBRC 107923 / NS-E).